The primary structure comprises 254 residues: UPF0246 protein CPR_2119 (254 aa).

Belongs to the UPF0246 family.

The polypeptide is UPF0246 protein CPR_2119 (Clostridium perfringens (strain SM101 / Type A)).